A 623-amino-acid polypeptide reads, in one-letter code: Mu-like prophage FluMu defective tail fiber protein (623 aa).

To phage Mu protein S.

The sequence is that of Mu-like prophage FluMu defective tail fiber protein from Haemophilus influenzae (strain ATCC 51907 / DSM 11121 / KW20 / Rd).